A 125-amino-acid chain; its full sequence is Small ribosomal subunit protein mS41 (125 aa).

Residues methionine 1–lysine 23 constitute a mitochondrion transit peptide.

This sequence belongs to the mitochondrion-specific ribosomal protein mS41 family.

The protein resides in the mitochondrion. Functionally, involved in telomere length regulation. This Kluyveromyces lactis (strain ATCC 8585 / CBS 2359 / DSM 70799 / NBRC 1267 / NRRL Y-1140 / WM37) (Yeast) protein is Small ribosomal subunit protein mS41 (FYV4).